Consider the following 129-residue polypeptide: Small ribosomal subunit protein uS11 (129 aa).

It belongs to the universal ribosomal protein uS11 family. In terms of assembly, part of the 30S ribosomal subunit. Interacts with proteins S7 and S18. Binds to IF-3.

Located on the platform of the 30S subunit, it bridges several disparate RNA helices of the 16S rRNA. Forms part of the Shine-Dalgarno cleft in the 70S ribosome. The sequence is that of Small ribosomal subunit protein uS11 from Nitratidesulfovibrio vulgaris (strain DSM 19637 / Miyazaki F) (Desulfovibrio vulgaris).